A 157-amino-acid polypeptide reads, in one-letter code: Small ribosomal subunit protein uS7 (157 aa).

Belongs to the universal ribosomal protein uS7 family. Part of the 30S ribosomal subunit. Contacts proteins S9 and S11.

One of the primary rRNA binding proteins, it binds directly to 16S rRNA where it nucleates assembly of the head domain of the 30S subunit. Is located at the subunit interface close to the decoding center, probably blocks exit of the E-site tRNA. In Chlamydia trachomatis serovar L2 (strain ATCC VR-902B / DSM 19102 / 434/Bu), this protein is Small ribosomal subunit protein uS7.